A 415-amino-acid polypeptide reads, in one-letter code: Serine hydroxymethyltransferase (415 aa).

(6S)-5,6,7,8-tetrahydrofolate is bound by residues leucine 119 and 123–125 (GHL). At lysine 228 the chain carries N6-(pyridoxal phosphate)lysine. Residue 353 to 355 (SAF) coordinates (6S)-5,6,7,8-tetrahydrofolate.

It belongs to the SHMT family. As to quaternary structure, homodimer. The cofactor is pyridoxal 5'-phosphate.

It localises to the cytoplasm. It catalyses the reaction (6R)-5,10-methylene-5,6,7,8-tetrahydrofolate + glycine + H2O = (6S)-5,6,7,8-tetrahydrofolate + L-serine. It participates in one-carbon metabolism; tetrahydrofolate interconversion. The protein operates within amino-acid biosynthesis; glycine biosynthesis; glycine from L-serine: step 1/1. Functionally, catalyzes the reversible interconversion of serine and glycine with tetrahydrofolate (THF) serving as the one-carbon carrier. Also exhibits THF-independent aldolase activity toward beta-hydroxyamino acids, producing glycine and aldehydes, via a retro-aldol mechanism. In Haloarcula marismortui (strain ATCC 43049 / DSM 3752 / JCM 8966 / VKM B-1809) (Halobacterium marismortui), this protein is Serine hydroxymethyltransferase.